The following is a 367-amino-acid chain: Germination protease (367 aa).

A propeptide spanning residues 1–15 is cleaved from the precursor; it reads MKEPLDLSKYSIRTD.

Belongs to the peptidase A25 family. As to quaternary structure, homotetramer. Autoproteolytically processed. The inactive tetrameric zymogen termed p46 autoprocesses to a smaller form termed p41, which is active only during spore germination.

It carries out the reaction Endopeptidase action with P4 Glu or Asp, P1 preferably Glu &gt; Asp, P1' hydrophobic and P2' Ala.. In terms of biological role, initiates the rapid degradation of small, acid-soluble proteins during spore germination. In Bacillus cereus (strain ATCC 14579 / DSM 31 / CCUG 7414 / JCM 2152 / NBRC 15305 / NCIMB 9373 / NCTC 2599 / NRRL B-3711), this protein is Germination protease.